The chain runs to 239 residues: Purine nucleoside phosphorylase DeoD-type (239 aa).

H5 provides a ligand contact to a purine D-ribonucleoside. Residues G21, R25, R44, and 88-91 contribute to the phosphate site; that span reads RVGS. A purine D-ribonucleoside-binding positions include 180 to 182 and 204 to 205; these read EME and SD. D205 serves as the catalytic Proton donor.

This sequence belongs to the PNP/UDP phosphorylase family. In terms of assembly, homohexamer; trimer of homodimers.

It catalyses the reaction a purine D-ribonucleoside + phosphate = a purine nucleobase + alpha-D-ribose 1-phosphate. It carries out the reaction a purine 2'-deoxy-D-ribonucleoside + phosphate = a purine nucleobase + 2-deoxy-alpha-D-ribose 1-phosphate. Its function is as follows. Catalyzes the reversible phosphorolytic breakdown of the N-glycosidic bond in the beta-(deoxy)ribonucleoside molecules, with the formation of the corresponding free purine bases and pentose-1-phosphate. This Erwinia tasmaniensis (strain DSM 17950 / CFBP 7177 / CIP 109463 / NCPPB 4357 / Et1/99) protein is Purine nucleoside phosphorylase DeoD-type.